The following is a 200-amino-acid chain: Recombination protein RecR (200 aa).

The C4-type zinc-finger motif lies at 58–75 (CSTCFCLKNLPESNCEFC). The 96-residue stretch at 82–177 (STLCIVATPK…SISRLALGLP (96 aa)) folds into the Toprim domain.

It belongs to the RecR family.

Its function is as follows. May play a role in DNA repair. It seems to be involved in an RecBC-independent recombinational process of DNA repair. It may act with RecF and RecO. The sequence is that of Recombination protein RecR from Chlamydia caviae (strain ATCC VR-813 / DSM 19441 / 03DC25 / GPIC) (Chlamydophila caviae).